A 122-amino-acid chain; its full sequence is Large ribosomal subunit protein uL18 (122 aa).

This sequence belongs to the universal ribosomal protein uL18 family. In terms of assembly, part of the 50S ribosomal subunit; part of the 5S rRNA/L5/L18/L25 subcomplex. Contacts the 5S and 23S rRNAs.

Functionally, this is one of the proteins that bind and probably mediate the attachment of the 5S RNA into the large ribosomal subunit, where it forms part of the central protuberance. This chain is Large ribosomal subunit protein uL18, found in Prochlorococcus marinus (strain AS9601).